The chain runs to 77 residues: uncharacterized protein (77 aa).

A disordered region spans residues 53–77; the sequence is KRVSSEANKEKSDITELLRKQVRPD.

This is an uncharacterized protein from Escherichia coli (strain K12).